Here is a 369-residue protein sequence, read N- to C-terminus: H-2 class I histocompatibility antigen, K-B alpha chain (369 aa).

The first 21 residues, 1–21 (MVPCTLLLLLAAALAPTQTRA), serve as a signal peptide directing secretion. An alpha-1 region spans residues 22 to 111 (GPHSLRYFVT…LLGYYNQSKG (90 aa)). The Extracellular segment spans residues 22-305 (GPHSLRYFVT…EPPPSTVSNM (284 aa)). An N-linked (GlcNAc...) asparagine glycan is attached at N107. Residues 112–203 (GSHTIQVISG…KNGNATLLRT (92 aa)) form an alpha-2 region. C122 and C185 are joined by a disulfide. N197 carries an N-linked (GlcNAc...) asparagine glycan. Residues 204–295 (DSPKAHVTHH…GLPEPLTLRW (92 aa)) are alpha-3. In terms of domain architecture, Ig-like C1-type spans 206 to 294 (PKAHVTHHSR…QGLPEPLTLR (89 aa)). C224 and C280 are oxidised to a cystine. Residues 296–305 (EPPPSTVSNM) form a connecting peptide region. The chain crosses the membrane as a helical span at residues 306 to 328 (ATVAVLVVLGAAIVTGAVVAFVM). Topologically, residues 329–369 (KMRRRNTGGKGGDYALAPGSQTSDLSLPDCKVMVHDPHSLA) are cytoplasmic. Residues S351 and S354 each carry the phosphoserine modification.

It belongs to the MHC class I family. Heterodimer of an alpha chain and a beta chain (beta-2-microglobulin).

It localises to the membrane. In terms of biological role, involved in the presentation of foreign antigens to the immune system. This Mus musculus (Mouse) protein is H-2 class I histocompatibility antigen, K-B alpha chain (H2-K1).